A 52-amino-acid polypeptide reads, in one-letter code: Rubredoxin (52 aa).

An N-formylmethionine; partial modification is found at methionine 1. Residues 1–52 (MKKYGCLVCGYVYDPAKGDPDHGIAPGTAFEDLPADWVCPLCGVSKDEFEPL) enclose the Rubredoxin-like domain. Fe cation is bound by residues cysteine 6, cysteine 9, cysteine 39, and cysteine 42.

The protein belongs to the rubredoxin family. It depends on Fe(3+) as a cofactor. Observed in four forms, with and without iron, and with and without formylation at Met-1.

In terms of biological role, rubredoxin is a small nonheme, iron protein lacking acid-labile sulfide. Its single Fe, chelated to 4 Cys, functions as an electron acceptor and may also stabilize the conformation of the molecule. The polypeptide is Rubredoxin (Heliobacterium mobile (Heliobacillus mobilis)).